We begin with the raw amino-acid sequence, 775 residues long: Thiamine repressible genes regulatory protein thi1 (775 aa).

The segment at residues 39–65 (CKHCRQKKIKCNGGQPCISCKTLNIEC) is a DNA-binding region (zn(2)-C6 fungal-type). A Phosphoserine modification is found at serine 208. Disordered stretches follow at residues 676–695 (LTGE…FQPF) and 754–775 (NVSE…EKNG).

Its subcellular location is the nucleus. In terms of biological role, transcription factor that activates the nmt1 promoter. Regulation of thiamine repressible genes. Positively regulates conjugation during meiosis. This Schizosaccharomyces pombe (strain 972 / ATCC 24843) (Fission yeast) protein is Thiamine repressible genes regulatory protein thi1 (thi1).